The chain runs to 70 residues: U-scutigerotoxin(02)-Tl1a (70 aa).

The signal sequence occupies residues 1 to 17; it reads MKYILLGLLLMVVLANA.

It belongs to the scutigerotoxin-02 family. Contains 4 disulfide bonds. In terms of tissue distribution, expressed by the venom gland.

It is found in the secreted. This is U-scutigerotoxin(02)-Tl1a from Thereuopoda longicornis (Long-legged centipede).